Reading from the N-terminus, the 642-residue chain is MANKKYDVIVVGAGHAGIEACLSSARLGLNTLMVTTNTDRIGYMSCNPSIGGLAKGHMVREIDVLGGQMGVAADETCIQYKRLNASKGPAVRGTRVQNDKHLYSQFQKEALYNQPNLEVLQGEVKRLILEKDLCVGVVLQDGSEIFGKATIITTGTFMNGVMHIGLRQEAGGRVGDQPSIGLSDQLAQFGFEVKRLKTGTPARLLKDSIDWSKTIPQAGDEKVYPFSFRSSDKLKLPQVLCYLTRTTEETHDIIRGNLDKSPMYCGIIEGVGPRYCPSIEDKITRFAERTSHQTFLEPEGLSTDLIYLQGISTSLPEDVQDRFLKTIPGLENVKVARYGYAVEYDYIEPTQIWHRLETRTIRQLFLAGQINGTSGYEEAAAQGLIAGINAAHSILGREEFILGRDQAYMGVMIDDLVTKGTREPYRMFTSRAEHRLVLREDNTIDRLSDLGRKLGLVSAESFELLTNLRERRQVLHDRLKNTVLYPTKDIQAILATIPTPAMSKSLTFEELLRRPELTSSHLELLNFELDPDPNVVEPVEIEVKYSGYVKRQMDLIVQSKRLEEMLLPDDLAYAEIRGLSNEEKDKLLRVKPRTLGQAQRISGVNPSAIQAIMIHLKGHKKIKEMGLEGQSGAGSTDSILAH.

FAD is bound by residues 12–17, V124, and S179; that span reads GAGHAG. 272 to 286 lines the NAD(+) pocket; it reads GPRYCPSIEDKITRF. Q369 lines the FAD pocket.

This sequence belongs to the MnmG family. As to quaternary structure, homodimer. Heterotetramer of two MnmE and two MnmG subunits. It depends on FAD as a cofactor.

It is found in the cytoplasm. Its function is as follows. NAD-binding protein involved in the addition of a carboxymethylaminomethyl (cmnm) group at the wobble position (U34) of certain tRNAs, forming tRNA-cmnm(5)s(2)U34. This chain is tRNA uridine 5-carboxymethylaminomethyl modification enzyme MnmG, found in Bdellovibrio bacteriovorus (strain ATCC 15356 / DSM 50701 / NCIMB 9529 / HD100).